We begin with the raw amino-acid sequence, 345 residues long: Opioid-binding protein/cell adhesion molecule (345 aa).

The signal sequence occupies residues 1–27 (MGVCGYLFLPWKCLVVVSLRLLFLVPT). Ig-like C2-type domains lie at 39–126 (PKAM…PKTS), 136–219 (PQIM…VKIT), and 223–310 (PPYI…ASIT). N-linked (GlcNAc...) asparagine glycans are attached at residues N44, N70, and N140. Cysteines 57 and 115 form a disulfide. 2 disulfide bridges follow: C157–C202 and C244–C296. Residues N285, N293, and N306 are each glycosylated (N-linked (GlcNAc...) asparagine). Residue N322 is the site of GPI-anchor amidated asparagine attachment. A propeptide spans 323-345 (SASRALACLWLSGTLLAHFFIKF) (removed in mature form).

It belongs to the immunoglobulin superfamily. IgLON family.

It is found in the cell membrane. In terms of biological role, binds opioids in the presence of acidic lipids; probably involved in cell contact. The sequence is that of Opioid-binding protein/cell adhesion molecule (OPCML) from Homo sapiens (Human).